The chain runs to 78 residues: U23-theraphotoxin-Cg1a 1 (78 aa).

Residues 1 to 21 (MKTSVLVTVLGLAVISVLCSA) form the signal peptide. A propeptide spanning residues 22–49 (SQDEEQDMYDELLSAVFEVNDELQSEAR) is cleaved from the precursor. Cystine bridges form between Cys50–Cys64, Cys57–Cys69, and Cys63–Cys75.

This sequence belongs to the neurotoxin 10 (Hwtx-1) family. 64 (Jztx-20) subfamily. As to expression, expressed by the venom gland.

The protein localises to the secreted. Probable ion channel inhibitor. This Chilobrachys guangxiensis (Chinese earth tiger tarantula) protein is U23-theraphotoxin-Cg1a 1.